Consider the following 86-residue polypeptide: Cell division topological specificity factor (86 aa).

The protein belongs to the MinE family.

Its function is as follows. Prevents the cell division inhibition by proteins MinC and MinD at internal division sites while permitting inhibition at polar sites. This ensures cell division at the proper site by restricting the formation of a division septum at the midpoint of the long axis of the cell. This Shewanella pealeana (strain ATCC 700345 / ANG-SQ1) protein is Cell division topological specificity factor.